A 514-amino-acid polypeptide reads, in one-letter code: Major capsid protein (514 aa).

It belongs to the T4 phage capsid protein family. In terms of assembly, homohexamer. Interacts with the portal protein. Interacts with the capsid vertex protein that forms pentamers. In terms of processing, a proteolytic cleavage by the prohead core protein protease gives rise to the mature major capsid protein during virus maturation.

It localises to the virion. In terms of biological role, major capsid protein that self-associates to form hexamers, building most of the capsid in association with pentons made of the capsid vertex protein and one dodecamer of the portal protein. The polypeptide is Major capsid protein (Vibrio parahaemolyticus (KVP40)).